Consider the following 291-residue polypeptide: MGVAHSDLHNDLSSSSCFGDRNILKPGLGDLPEACVAIIVENLDPVEICRFSKLNRAFRGASWADCVWESKLPQNYRDVLEKILGGFPENLQKRHLYAFLSRINSFDDATKKVWIDKRTSGVCLSISAKGLSITGIDDRRYWSHIPTDESRFSSVAYLQQIWWFEVDGEIDFPFPVGTYSIFFRLQLGRSGKWFGRRVCNTEQVHGWDIKPVRFQLWTEDGQYSSSQCMLTERGNWIHYHAGDVVVRESNRSSTKIKFSMTQIDCTHTKGGLSLDSVVVYPSSCKDQLKRF.

Residues lysine 25–lysine 71 enclose the F-box domain.

This is F-box protein PP2-A12 (P2A12) from Arabidopsis thaliana (Mouse-ear cress).